A 370-amino-acid chain; its full sequence is 4-hydroxy-3-methylbut-2-en-1-yl diphosphate synthase (flavodoxin) (370 aa).

4 residues coordinate [4Fe-4S] cluster: Cys270, Cys273, Cys305, and Glu312.

This sequence belongs to the IspG family. [4Fe-4S] cluster serves as cofactor.

The enzyme catalyses (2E)-4-hydroxy-3-methylbut-2-enyl diphosphate + oxidized [flavodoxin] + H2O + 2 H(+) = 2-C-methyl-D-erythritol 2,4-cyclic diphosphate + reduced [flavodoxin]. Its pathway is isoprenoid biosynthesis; isopentenyl diphosphate biosynthesis via DXP pathway; isopentenyl diphosphate from 1-deoxy-D-xylulose 5-phosphate: step 5/6. In terms of biological role, converts 2C-methyl-D-erythritol 2,4-cyclodiphosphate (ME-2,4cPP) into 1-hydroxy-2-methyl-2-(E)-butenyl 4-diphosphate. The sequence is that of 4-hydroxy-3-methylbut-2-en-1-yl diphosphate synthase (flavodoxin) from Azotobacter vinelandii (strain DJ / ATCC BAA-1303).